The sequence spans 532 residues: Probable calcium-binding mitochondrial carrier CBG00135 (532 aa).

EF-hand domains lie at 70 to 105 (EKEKKIREMYDRLDADNDGSIDIRDLTQALSSQTPH), 107 to 136 (PATMAPKLLAKMKREDSDRVTYADFTNYVI), 137 to 172 (AHEARLAEVFDQIDSNRDGEVDVSEIKSYCKEMGVN), and 173 to 208 (LDDHKALSIVKKMDQSGSSSVNLNEFQDFMLLYPST). Positions 83, 85, 87, 89, and 94 each coordinate Ca(2+). Ca(2+) contacts are provided by Asp150, Asn152, Asp154, Glu156, and Glu161. Solcar repeat units lie at residues 243-329 (GVWW…IKRW), 339-425 (LTTY…LKSC), and 436-526 (PGVL…VRKQ). 6 consecutive transmembrane segments (helical) span residues 249-266 (LVAGGVAGAMSRTCTAPF), 304-323 (GNGINVIKIAPESAMKFMSY), 349-362 (SSAGAISQTAIYPM), 400-419 (GYLPNLLGIIPYAGIDLTVY), 442-459 (LACGTCSSTCGQLASYPL), and 501-518 (GITPNFMKVIPAVSISYV).

It belongs to the mitochondrial carrier (TC 2.A.29) family.

The protein localises to the mitochondrion inner membrane. Its function is as follows. Calcium-dependent mitochondrial solute carrier. In Caenorhabditis briggsae, this protein is Probable calcium-binding mitochondrial carrier CBG00135.